The primary structure comprises 444 residues: Putative dipeptidase CPC735_015490 (444 aa).

Positions 1-34 (MSQRTEHNGSWLRNAGSLLSVLACVAVLASPASA) are cleaved as a signal peptide. Positions 67, 69, and 178 each coordinate Zn(2+). Residues cysteine 118 and cysteine 207 are joined by a disulfide bond. A substrate-binding site is contributed by histidine 205. 2 residues coordinate Zn(2+): histidine 250 and histidine 271. Positions 282 and 342 each coordinate substrate. Asparagine 413 is a glycosylation site (N-linked (GlcNAc...) asparagine).

This sequence belongs to the metallo-dependent hydrolases superfamily. Peptidase M19 family. It depends on Zn(2+) as a cofactor.

It carries out the reaction an L-aminoacyl-L-amino acid + H2O = 2 an L-alpha-amino acid. Functionally, hydrolyzes a wide range of dipeptides. In Coccidioides posadasii (strain C735) (Valley fever fungus), this protein is Putative dipeptidase CPC735_015490.